Consider the following 232-residue polypeptide: tRNA1(Val) (adenine(37)-N6)-methyltransferase (232 aa).

Belongs to the methyltransferase superfamily. tRNA (adenine-N(6)-)-methyltransferase family.

It is found in the cytoplasm. The enzyme catalyses adenosine(37) in tRNA1(Val) + S-adenosyl-L-methionine = N(6)-methyladenosine(37) in tRNA1(Val) + S-adenosyl-L-homocysteine + H(+). Specifically methylates the adenine in position 37 of tRNA(1)(Val) (anticodon cmo5UAC). The chain is tRNA1(Val) (adenine(37)-N6)-methyltransferase from Haemophilus influenzae (strain PittEE).